The primary structure comprises 130 residues: Small ribosomal subunit protein uS8 (130 aa).

Belongs to the universal ribosomal protein uS8 family. In terms of assembly, part of the 30S ribosomal subunit. Contacts proteins S5 and S12.

One of the primary rRNA binding proteins, it binds directly to 16S rRNA central domain where it helps coordinate assembly of the platform of the 30S subunit. This is Small ribosomal subunit protein uS8 from Coxiella burnetii (strain Dugway 5J108-111).